The following is a 140-amino-acid chain: ATP synthase epsilon chain (140 aa).

It belongs to the ATPase epsilon chain family. In terms of assembly, F-type ATPases have 2 components, CF(1) - the catalytic core - and CF(0) - the membrane proton channel. CF(1) has five subunits: alpha(3), beta(3), gamma(1), delta(1), epsilon(1). CF(0) has three main subunits: a, b and c.

It is found in the cell inner membrane. Functionally, produces ATP from ADP in the presence of a proton gradient across the membrane. This chain is ATP synthase epsilon chain, found in Stenotrophomonas maltophilia (strain R551-3).